We begin with the raw amino-acid sequence, 399 residues long: tRNA-specific 2-thiouridylase MnmA (399 aa).

ATP is bound by residues 21 to 28 and leucine 47; that span reads AMSGGVDS. Cysteine 115 serves as the catalytic Nucleophile. An intrachain disulfide couples cysteine 115 to cysteine 211. Residue glycine 139 participates in ATP binding. The interaction with tRNA stretch occupies residues 161 to 163; the sequence is RDQ. Cysteine 211 serves as the catalytic Cysteine persulfide intermediate.

It belongs to the MnmA/TRMU family.

It localises to the cytoplasm. It carries out the reaction S-sulfanyl-L-cysteinyl-[protein] + uridine(34) in tRNA + AH2 + ATP = 2-thiouridine(34) in tRNA + L-cysteinyl-[protein] + A + AMP + diphosphate + H(+). Its function is as follows. Catalyzes the 2-thiolation of uridine at the wobble position (U34) of tRNA, leading to the formation of s(2)U34. In Parvibaculum lavamentivorans (strain DS-1 / DSM 13023 / NCIMB 13966), this protein is tRNA-specific 2-thiouridylase MnmA.